The primary structure comprises 382 residues: ATP phosphoribosyltransferase regulatory subunit (382 aa).

This sequence belongs to the class-II aminoacyl-tRNA synthetase family. HisZ subfamily. As to quaternary structure, heteromultimer composed of HisG and HisZ subunits.

The protein resides in the cytoplasm. It participates in amino-acid biosynthesis; L-histidine biosynthesis; L-histidine from 5-phospho-alpha-D-ribose 1-diphosphate: step 1/9. Its function is as follows. Required for the first step of histidine biosynthesis. May allow the feedback regulation of ATP phosphoribosyltransferase activity by histidine. The chain is ATP phosphoribosyltransferase regulatory subunit from Lacticaseibacillus paracasei (strain ATCC 334 / BCRC 17002 / CCUG 31169 / CIP 107868 / KCTC 3260 / NRRL B-441) (Lactobacillus paracasei).